Reading from the N-terminus, the 161-residue chain is HMG1/2-like protein (161 aa).

Disordered stretches follow at residues 1-46, 60-91, and 113-161; these read MKGA…KRAP, FKQK…EKAP, and GESA…DDDE. Basic and acidic residues-rich tracts occupy residues 10–27 and 77–89; these read AKAD…EKPA and AGER…ESEK. The HMG box DNA-binding region spans 42–111; sequence PKRAPSAFFV…EYNKAIAAYN (70 aa). The segment covering 114 to 123 has biased composition (low complexity); that stretch reads ESAAAAAPKK. Acidic residues predominate over residues 145–161; it reads NDDDDDEGSDEDEDDDE.

Belongs to the HMGB family.

It is found in the nucleus. This is HMG1/2-like protein from Triticum aestivum (Wheat).